Consider the following 230-residue polypeptide: Osmotin-like protein PR-5x (230 aa).

The first 25 residues, 1–25, serve as a signal peptide directing secretion; it reads MYTNMGYLTSSFIFFFLALVTYTYA. Disulfide bonds link cysteine 34–cysteine 229, cysteine 76–cysteine 86, cysteine 91–cysteine 97, cysteine 145–cysteine 217, cysteine 150–cysteine 200, cysteine 158–cysteine 168, cysteine 172–cysteine 181, and cysteine 182–cysteine 187.

Belongs to the thaumatin family.

Its subcellular location is the secreted. The protein resides in the vacuole. It carries out the reaction Endohydrolysis of (1-&gt;3)- or (1-&gt;4)-linkages in beta-D-glucans when the glucose residue whose reducing group is involved in the linkage to be hydrolyzed is itself substituted at C-3.. In terms of biological role, antifungal protein. May bind to beta-glucans and have beta-1,3-D-glucanase activity. This is Osmotin-like protein PR-5x from Solanum lycopersicum (Tomato).